The primary structure comprises 347 residues: Protein RecA (347 aa).

ATP is bound at residue 67–74 (GPESSGKT).

The protein belongs to the RecA family.

The protein resides in the cytoplasm. Its function is as follows. Can catalyze the hydrolysis of ATP in the presence of single-stranded DNA, the ATP-dependent uptake of single-stranded DNA by duplex DNA, and the ATP-dependent hybridization of homologous single-stranded DNAs. It interacts with LexA causing its activation and leading to its autocatalytic cleavage. The protein is Protein RecA of Helicobacter pylori (strain P12).